Consider the following 142-residue polypeptide: ATP synthase epsilon chain (142 aa).

Belongs to the ATPase epsilon chain family. As to quaternary structure, F-type ATPases have 2 components, CF(1) - the catalytic core - and CF(0) - the membrane proton channel. CF(1) has five subunits: alpha(3), beta(3), gamma(1), delta(1), epsilon(1). CF(0) has three main subunits: a, b and c.

It localises to the cell inner membrane. Produces ATP from ADP in the presence of a proton gradient across the membrane. This Shewanella sp. (strain ANA-3) protein is ATP synthase epsilon chain.